Reading from the N-terminus, the 867-residue chain is Piwi-like protein 1 (867 aa).

Basic residues predominate over residues methionine 1–glycine 11. Residues methionine 1 to threonine 70 are disordered. Over residues alanine 28 to glutamine 44 the composition is skewed to polar residues. The PAZ domain occupies threonine 286–glycine 397. Residues threonine 324–arginine 326 form a required for binding 2'-O-methylated 3'-end of piRNAs region. Residues serine 485–glutamate 621 are MID region. Positions isoleucine 561–histidine 853 constitute a Piwi domain. Residues aspartate 638, glutamate 676, aspartate 708, and histidine 842 contribute to the active site.

This sequence belongs to the argonaute family. Piwi subfamily. Mg(2+) serves as cofactor. In terms of processing, methylated on arginine residues; required for the interaction with Tudor domain-containing protein and subsequent localization to the meiotic nuage, also named P granule.

The protein resides in the cytoplasm. Functionally, endoribonuclease that plays a central role in postnatal germ cells by repressing transposable elements and preventing their mobilization, which is essential for the germline integrity. Acts via the piRNA metabolic process, which mediates the repression of transposable elements during meiosis by forming complexes composed of piRNAs and Piwi proteins and govern the methylation and subsequent repression of transposons. Directly binds methylated piRNAs, a class of 24 to 30 nucleotide RNAs that are generated by a Dicer-independent mechanism and are primarily derived from transposons and other repeated sequence elements. Strongly prefers a uridine in the first position of their guide (g1U preference, also named 1U-bias). Besides their function in transposable elements repression, piRNAs are probably involved in other processes during meiosis such as translation regulation. Not involved in the piRNA amplification loop, also named ping-pong amplification cycle. Acts as an endoribonuclease that cleaves transposon messenger RNAs. The chain is Piwi-like protein 1 (PIWIL1) from Gallus gallus (Chicken).